A 330-amino-acid polypeptide reads, in one-letter code: Aspartate--ammonia ligase (330 aa).

The protein belongs to the class-II aminoacyl-tRNA synthetase family. AsnA subfamily.

The protein resides in the cytoplasm. The catalysed reaction is L-aspartate + NH4(+) + ATP = L-asparagine + AMP + diphosphate + H(+). It participates in amino-acid biosynthesis; L-asparagine biosynthesis; L-asparagine from L-aspartate (ammonia route): step 1/1. The protein is Aspartate--ammonia ligase of Shigella dysenteriae serotype 1 (strain Sd197).